The sequence spans 82 residues: Small ribosomal subunit protein bS18 (82 aa).

Residues 1 to 25 are disordered; the sequence is MADTSSSQARRPFHRRRKTCPFSGA.

The protein belongs to the bacterial ribosomal protein bS18 family. Part of the 30S ribosomal subunit. Forms a tight heterodimer with protein bS6.

Functionally, binds as a heterodimer with protein bS6 to the central domain of the 16S rRNA, where it helps stabilize the platform of the 30S subunit. This chain is Small ribosomal subunit protein bS18, found in Agrobacterium fabrum (strain C58 / ATCC 33970) (Agrobacterium tumefaciens (strain C58)).